Consider the following 383-residue polypeptide: Ribosomal RNA large subunit methyltransferase G (383 aa).

The protein belongs to the methyltransferase superfamily. RlmG family.

The protein resides in the cytoplasm. The catalysed reaction is guanosine(1835) in 23S rRNA + S-adenosyl-L-methionine = N(2)-methylguanosine(1835) in 23S rRNA + S-adenosyl-L-homocysteine + H(+). Its function is as follows. Specifically methylates the guanine in position 1835 (m2G1835) of 23S rRNA. This is Ribosomal RNA large subunit methyltransferase G from Shewanella denitrificans (strain OS217 / ATCC BAA-1090 / DSM 15013).